A 287-amino-acid chain; its full sequence is Festuclavine synthase I (287 aa).

The protein belongs to the fgaFS/easG family.

The enzyme catalyses festuclavine + NAD(+) = 6,8-dimethyl-6,7-didehydroergoline + NADH + H(+). The protein operates within alkaloid biosynthesis; ergot alkaloid biosynthesis. Festuclavine synthase; part of the gene cluster that mediates the biosynthesis of isofumigaclavines, fungal ergot alkaloids. The tryptophan dimethylallyltransferase ifgA catalyzes the first step of ergot alkaloid biosynthesis by condensing dimethylallyl diphosphate (DMAP) and tryptophan to form 4-dimethylallyl-L-tryptophan. The second step is catalyzed by the methyltransferase ifgB that methylates 4-dimethylallyl-L-tryptophan in the presence of S-adenosyl-L-methionine, resulting in the formation of N-methyl-dimethylallyl-L-tryptophan. The catalase ifgD and the FAD-dependent oxidoreductase ifgC then transform N-methyl-dimethylallyl-L-tryptophan to chanoclavine-I which is further oxidized by ifgE in the presence of NAD(+), resulting in the formation of chanoclavine-I aldehyde. The chanoclavine-I aldehyde reductases ifgG and/or fgaOx3 reduce chanoclavine-I aldehyde to dihydrochanoclavine-I aldehyde that spontaneously dehydrates to form 6,8-dimethyl-6,7-didehydroergoline. The festuclavine dehydrogenases ifgF1 and/or ifgF2 then catalyze the reduction of 6,8-dimethyl-6,7-didehydroergoline to form festuclavine. Hydrolysis of festuclavine by a yet undetermined cytochrome P450 monooxygenase (called ifgH) then leads to the formation of isofumigaclavine B which is in turn acetylated by ifgI to isofumigaclavine A. Penicillium roqueforti has interestingly at least two sets of genes for the consumption of chanoclavine-I aldehyde on three different loci, the OYEs ifgG/fgaOx3 and the festuclavine synthase homologs ifgF1/ifgF2. The reason for the duplication of these genes is unclear, probably to ensure the conversion of chanoclavine-I aldehyde by differential gene expression under various environmental conditions. The polypeptide is Festuclavine synthase I (Penicillium roqueforti (strain FM164)).